A 219-amino-acid chain; its full sequence is Alpha N-terminal protein methyltransferase 1 (219 aa).

S-adenosyl-L-methionine is bound by residues glycine 64, arginine 69, leucine 111 to glutamine 112, and glutamine 127.

This sequence belongs to the methyltransferase superfamily. NTM1 family.

Its subcellular location is the cytoplasm. The catalysed reaction is N-terminal L-alanyl-L-prolyl-L-lysyl-[protein] + 3 S-adenosyl-L-methionine = N-terminal N,N,N-trimethyl-L-alanyl-L-prolyl-L-lysyl-[protein] + 3 S-adenosyl-L-homocysteine + 3 H(+). It carries out the reaction N-terminal L-seryl-L-prolyl-L-lysyl-[protein] + 3 S-adenosyl-L-methionine = N-terminal N,N,N-trimethyl-L-seryl-L-prolyl-L-lysyl-[protein] + 3 S-adenosyl-L-homocysteine + 3 H(+). It catalyses the reaction N-terminal L-prolyl-L-prolyl-L-lysyl-[protein] + 2 S-adenosyl-L-methionine = N-terminal N,N-dimethyl-L-prolyl-L-prolyl-L-lysyl-[protein] + 2 S-adenosyl-L-homocysteine + 2 H(+). In terms of biological role, alpha-N-methyltransferase that methylates the N-terminus of target proteins containing the N-terminal motif [Ala/Pro/Ser]-Pro-Lys when the initiator Met is cleaved. Specifically catalyzes mono-, di- or tri-methylation of exposed alpha-amino group of Ala or Ser residue in the [Ala/Ser]-Pro-Lys motif and mono- or di-methylation of Pro in the Pro-Pro-Lys motif. The chain is Alpha N-terminal protein methyltransferase 1 (tae1) from Schizosaccharomyces pombe (strain 972 / ATCC 24843) (Fission yeast).